Here is a 39-residue protein sequence, read N- to C-terminus: Photosystem II reaction center protein J (39 aa).

Residues 9–29 traverse the membrane as a helical segment; that stretch reads LWLVVTFGGIVVLTVLGIFIY.

It belongs to the PsbJ family. In terms of assembly, PSII is composed of 1 copy each of membrane proteins PsbA, PsbB, PsbC, PsbD, PsbE, PsbF, PsbH, PsbI, PsbJ, PsbK, PsbL, PsbM, PsbT, PsbY, PsbZ, Psb30/Ycf12, at least 3 peripheral proteins of the oxygen-evolving complex and a large number of cofactors. It forms dimeric complexes.

Its subcellular location is the plastid. The protein localises to the chloroplast thylakoid membrane. Its function is as follows. One of the components of the core complex of photosystem II (PSII). PSII is a light-driven water:plastoquinone oxidoreductase that uses light energy to abstract electrons from H(2)O, generating O(2) and a proton gradient subsequently used for ATP formation. It consists of a core antenna complex that captures photons, and an electron transfer chain that converts photonic excitation into a charge separation. In Cyanidium caldarium (Red alga), this protein is Photosystem II reaction center protein J.